Consider the following 87-residue polypeptide: Translation initiation factor IF-1 2 (87 aa).

The 72-residue stretch at 1–72 folds into the S1-like domain; the sequence is MAKEELLEMQ…SKGRITFRHI (72 aa).

The protein belongs to the IF-1 family. As to quaternary structure, component of the 30S ribosomal translation pre-initiation complex which assembles on the 30S ribosome in the order IF-2 and IF-3, IF-1 and N-formylmethionyl-tRNA(fMet); mRNA recruitment can occur at any time during PIC assembly.

The protein resides in the cytoplasm. In terms of biological role, one of the essential components for the initiation of protein synthesis. Stabilizes the binding of IF-2 and IF-3 on the 30S subunit to which N-formylmethionyl-tRNA(fMet) subsequently binds. Helps modulate mRNA selection, yielding the 30S pre-initiation complex (PIC). Upon addition of the 50S ribosomal subunit IF-1, IF-2 and IF-3 are released leaving the mature 70S translation initiation complex. This is Translation initiation factor IF-1 2 from Dechloromonas aromatica (strain RCB).